The chain runs to 112 residues: MNYSPGLVSLILLLLGRTRGDSVTQMEGPVTLSEEAFLTINCTYTATGYPSLFWYVQYPGEGLQLLLKATKADDKGSNKGFEATYRKETTSFHLEKGSVQVSDSAVYFCALS.

Positions 1–20 (MNYSPGLVSLILLLLGRTRG) are cleaved as a signal peptide. The Ig-like domain maps to 21–112 (DSVTQMEGPV…DSAVYFCALS (92 aa)). Residue Asn-41 is glycosylated (N-linked (GlcNAc...) asparagine). Cys-42 and Cys-109 are disulfide-bonded.

As to quaternary structure, alpha-beta TR is a heterodimer composed of an alpha and beta chain; disulfide-linked. The alpha-beta TR is associated with the transmembrane signaling CD3 coreceptor proteins to form the TR-CD3 (TcR or TCR). The assembly of alpha-beta TR heterodimers with CD3 occurs in the endoplasmic reticulum where a single alpha-beta TR heterodimer associates with one CD3D-CD3E heterodimer, one CD3G-CD3E heterodimer and one CD247 homodimer forming a stable octameric structure. CD3D-CD3E and CD3G-CD3E heterodimers preferentially associate with TR alpha and TR beta chains, respectively. The association of the CD247 homodimer is the last step of TcR assembly in the endoplasmic reticulum and is required for transport to the cell surface.

It is found in the cell membrane. V region of the variable domain of T cell receptor (TR) alpha chain that participates in the antigen recognition. Alpha-beta T cell receptors are antigen specific receptors which are essential to the immune response and are present on the cell surface of T lymphocytes. Recognize peptide-major histocompatibility (MH) (pMH) complexes that are displayed by antigen presenting cells (APC), a prerequisite for efficient T cell adaptive immunity against pathogens. Binding of alpha-beta TR to pMH complex initiates TR-CD3 clustering on the cell surface and intracellular activation of LCK that phosphorylates the ITAM motifs of CD3G, CD3D, CD3E and CD247 enabling the recruitment of ZAP70. In turn ZAP70 phosphorylates LAT, which recruits numerous signaling molecules to form the LAT signalosome. The LAT signalosome propagates signal branching to three major signaling pathways, the calcium, the mitogen-activated protein kinase (MAPK) kinase and the nuclear factor NF-kappa-B (NF-kB) pathways, leading to the mobilization of transcription factors that are critical for gene expression and essential for T cell growth and differentiation. The T cell repertoire is generated in the thymus, by V-(D)-J rearrangement. This repertoire is then shaped by intrathymic selection events to generate a peripheral T cell pool of self-MH restricted, non-autoaggressive T cells. Post-thymic interaction of alpha-beta TR with the pMH complexes shapes TR structural and functional avidity. The protein is T cell receptor alpha variable 9-2 of Homo sapiens (Human).